A 255-amino-acid polypeptide reads, in one-letter code: uncharacterized protein (255 aa).

Belongs to the methyltransferase superfamily.

This is an uncharacterized protein from Mycobacterium ulcerans (strain Agy99).